Reading from the N-terminus, the 431-residue chain is Probable prephenate dehydrogenase [NADP(+)] (431 aa).

5 to 34 (FQVGIIGFGDMGRLYAEYISKAGWRVNVCD) lines the NADP(+) pocket. Residues 5 to 285 (FQVGIIGFGD…GENMDRNSSG (281 aa)) form the Prephenate/arogenate dehydrogenase domain.

It belongs to the prephenate/arogenate dehydrogenase family.

The protein resides in the cytoplasm. The catalysed reaction is prephenate + NADP(+) = 3-(4-hydroxyphenyl)pyruvate + CO2 + NADPH. Its pathway is amino-acid biosynthesis; L-tyrosine biosynthesis; (4-hydroxyphenyl)pyruvate from prephenate (NADP(+) route): step 1/1. In Schizosaccharomyces pombe (strain 972 / ATCC 24843) (Fission yeast), this protein is Probable prephenate dehydrogenase [NADP(+)] (tyr1).